Consider the following 453-residue polypeptide: Bifunctional protein GlmU (453 aa).

The segment at 1–225 (MNIVILAAGT…EWETLGVNSK (225 aa)) is pyrophosphorylase. UDP-N-acetyl-alpha-D-glucosamine is bound by residues 6–9 (LAAG), Lys20, Gln71, 76–77 (GT), 98–100 (YGD), Gly135, Glu150, Asn165, and Asn223. Asp100 is a Mg(2+) binding site. Residue Asn223 coordinates Mg(2+). The tract at residues 226–246 (AQLAELERIHQRNVADALLVD) is linker. Residues 247–453 (GVTLADPARV…GYVRPVKKKS (207 aa)) form an N-acetyltransferase region. Positions 329 and 347 each coordinate UDP-N-acetyl-alpha-D-glucosamine. Catalysis depends on His359, which acts as the Proton acceptor. Residues Tyr362 and Asn373 each coordinate UDP-N-acetyl-alpha-D-glucosamine. Acetyl-CoA is bound by residues Ala376, 382-383 (NY), Ser401, and Ala419.

It in the N-terminal section; belongs to the N-acetylglucosamine-1-phosphate uridyltransferase family. The protein in the C-terminal section; belongs to the transferase hexapeptide repeat family. In terms of assembly, homotrimer. Mg(2+) serves as cofactor.

It localises to the cytoplasm. It catalyses the reaction alpha-D-glucosamine 1-phosphate + acetyl-CoA = N-acetyl-alpha-D-glucosamine 1-phosphate + CoA + H(+). It carries out the reaction N-acetyl-alpha-D-glucosamine 1-phosphate + UTP + H(+) = UDP-N-acetyl-alpha-D-glucosamine + diphosphate. The protein operates within nucleotide-sugar biosynthesis; UDP-N-acetyl-alpha-D-glucosamine biosynthesis; N-acetyl-alpha-D-glucosamine 1-phosphate from alpha-D-glucosamine 6-phosphate (route II): step 2/2. It functions in the pathway nucleotide-sugar biosynthesis; UDP-N-acetyl-alpha-D-glucosamine biosynthesis; UDP-N-acetyl-alpha-D-glucosamine from N-acetyl-alpha-D-glucosamine 1-phosphate: step 1/1. Its pathway is bacterial outer membrane biogenesis; LPS lipid A biosynthesis. Catalyzes the last two sequential reactions in the de novo biosynthetic pathway for UDP-N-acetylglucosamine (UDP-GlcNAc). The C-terminal domain catalyzes the transfer of acetyl group from acetyl coenzyme A to glucosamine-1-phosphate (GlcN-1-P) to produce N-acetylglucosamine-1-phosphate (GlcNAc-1-P), which is converted into UDP-GlcNAc by the transfer of uridine 5-monophosphate (from uridine 5-triphosphate), a reaction catalyzed by the N-terminal domain. The chain is Bifunctional protein GlmU from Burkholderia orbicola (strain MC0-3).